Here is a 257-residue protein sequence, read N- to C-terminus: Alcohol dehydrogenase 1 (257 aa).

An NAD(+)-binding site is contributed by 9–33; it reads VFVGGLGFIGYEACKTLITRDLASL. Substrate is bound at residue serine 137. Residue tyrosine 150 is the Proton acceptor of the active site.

Belongs to the short-chain dehydrogenases/reductases (SDR) family. As to quaternary structure, homodimer.

The enzyme catalyses a primary alcohol + NAD(+) = an aldehyde + NADH + H(+). It catalyses the reaction a secondary alcohol + NAD(+) = a ketone + NADH + H(+). In Ceratitis cosyra (Mango fruit fly), this protein is Alcohol dehydrogenase 1 (ADH1).